A 580-amino-acid chain; its full sequence is Acyl-coenzyme A synthetase ACSM3, mitochondrial (580 aa).

Residues 1–21 (MAMLLRARCFHRLAIPDPRRI) constitute a mitochondrion transit peptide. An N6-succinyllysine mark is found at Lys67 and Lys100. Lys151 carries the post-translational modification N6-acetyllysine. Residues 229–237 (TSGTTGPPK), 368–373 (EGYGQT), Asp455, Arg470, and Lys566 each bind ATP.

It belongs to the ATP-dependent AMP-binding enzyme family. Requires Mg(2+) as cofactor. The cofactor is Mn(2+).

The protein resides in the mitochondrion. It is found in the mitochondrion matrix. It catalyses the reaction a medium-chain fatty acid + ATP + CoA = a medium-chain fatty acyl-CoA + AMP + diphosphate. The enzyme catalyses propanoate + ATP + CoA = propanoyl-CoA + AMP + diphosphate. It carries out the reaction butanoate + ATP + CoA = butanoyl-CoA + AMP + diphosphate. The catalysed reaction is 2-methylpropanoate + ATP + CoA = 2-methylpropanoyl-CoA + AMP + diphosphate. It catalyses the reaction 2-methylbutanoate + ATP + CoA = 2-methylbutanoyl-CoA + AMP + diphosphate. The enzyme catalyses octanoate + ATP + CoA = octanoyl-CoA + AMP + diphosphate. Functionally, catalyzes the activation of fatty acids by CoA to produce an acyl-CoA, the first step in fatty acid metabolism. Capable of activating medium-chain fatty acids with a preference for isobutyrate among fatty acids with 2-6 carbon atoms. In Rattus norvegicus (Rat), this protein is Acyl-coenzyme A synthetase ACSM3, mitochondrial (Acsm3).